The chain runs to 222 residues: MSDQNLGQGSDEPEREEPIVRDKRRIDPETGKVREPQDLSHEELVDVGPAGESQGEEILSDDDLDLLSGQTTADQLAADQLAADQLAAERLADLQRVTAEYANYRKRTESNREIERERAIGDAVKGLIPVLDDLERADTHGDLIEGSAFATIAAKLRASVERLGLLPYGEKGEPFDPQIHEAIFQQPTPGVTADTVADVVETGYRLGSTTVRVAKVVVAVPA.

Residues 1–64 (MSDQNLGQGS…GEEILSDDDL (64 aa)) form a disordered region. Basic and acidic residues predominate over residues 16–44 (EEPIVRDKRRIDPETGKVREPQDLSHEEL). Acidic residues predominate over residues 54–64 (QGEEILSDDDL).

This sequence belongs to the GrpE family. As to quaternary structure, homodimer.

The protein resides in the cytoplasm. Participates actively in the response to hyperosmotic and heat shock by preventing the aggregation of stress-denatured proteins, in association with DnaK and GrpE. It is the nucleotide exchange factor for DnaK and may function as a thermosensor. Unfolded proteins bind initially to DnaJ; upon interaction with the DnaJ-bound protein, DnaK hydrolyzes its bound ATP, resulting in the formation of a stable complex. GrpE releases ADP from DnaK; ATP binding to DnaK triggers the release of the substrate protein, thus completing the reaction cycle. Several rounds of ATP-dependent interactions between DnaJ, DnaK and GrpE are required for fully efficient folding. This Leifsonia xyli subsp. xyli (strain CTCB07) protein is Protein GrpE.